Here is a 157-residue protein sequence, read N- to C-terminus: Protein-export protein SecB (157 aa).

The protein belongs to the SecB family. Homotetramer, a dimer of dimers. One homotetramer interacts with 1 SecA dimer.

Its subcellular location is the cytoplasm. In terms of biological role, one of the proteins required for the normal export of preproteins out of the cell cytoplasm. It is a molecular chaperone that binds to a subset of precursor proteins, maintaining them in a translocation-competent state. It also specifically binds to its receptor SecA. The protein is Protein-export protein SecB of Shewanella oneidensis (strain ATCC 700550 / JCM 31522 / CIP 106686 / LMG 19005 / NCIMB 14063 / MR-1).